The chain runs to 104 residues: Ig kappa chain V region XP-1 (104 aa).

Residues 1 to 24 (ADIVMTQTPASVSEPVGGTVTIKC) form a framework-1 region. Residues 25–35 (QASQSIFBBLA) form a complementarity-determining-1 region. Residues 36-49 (WYQKPGZPPKGLLY) form a framework-2 region. Positions 50 to 56 (TBYTLAS) are complementarity-determining-2. Residues 57–88 (GVSSRFSGGGSGTBFTLTISDLECABAATYYC) are framework-3. Positions 89-100 (EXTGVSZBXBKG) are complementarity-determining-3. Positions 101–104 (FGGG) are framework-4.

This chain is Ig kappa chain V region XP-1, found in Oryctolagus cuniculus (Rabbit).